Consider the following 344-residue polypeptide: S-methyl-5'-thioadenosine phosphorylase (344 aa).

Phosphate is bound by residues threonine 51, 99–100, and 132–133; these read RH and SA. Residue methionine 234 participates in substrate binding. Serine 235 is a binding site for phosphate. 258 to 260 contacts substrate; that stretch reads DYD.

It belongs to the PNP/MTAP phosphorylase family. MTAP subfamily. As to quaternary structure, homotrimer.

It localises to the cytoplasm. The protein localises to the nucleus. It catalyses the reaction S-methyl-5'-thioadenosine + phosphate = 5-(methylsulfanyl)-alpha-D-ribose 1-phosphate + adenine. Its pathway is amino-acid biosynthesis; L-methionine biosynthesis via salvage pathway; S-methyl-5-thio-alpha-D-ribose 1-phosphate from S-methyl-5'-thioadenosine (phosphorylase route): step 1/1. Functionally, catalyzes the reversible phosphorylation of S-methyl-5'-thioadenosine (MTA) to adenine and 5-methylthioribose-1-phosphate. Involved in the breakdown of MTA, a major by-product of polyamine biosynthesis. Responsible for the first step in the methionine salvage pathway after MTA has been generated from S-adenosylmethionine. Has broad substrate specificity with 6-aminopurine nucleosides as preferred substrates. This chain is S-methyl-5'-thioadenosine phosphorylase, found in Phaeosphaeria nodorum (strain SN15 / ATCC MYA-4574 / FGSC 10173) (Glume blotch fungus).